The primary structure comprises 1217 residues: Nuclear matrix constituent protein 1 (1217 aa).

The span at 1 to 14 (MLTPQRSAWSLKSK) shows a compositional bias: polar residues. The segment at 1 to 45 (MLTPQRSAWSLKSKVSSEKPRSKGKGITKNLDSAATPFPPLGLLN) is disordered. The stretch at 159–746 (VTDLEKALRE…KNQRAEFIKE (588 aa)) forms a coiled coil. Residues 892–904 (SEDAAANDNNPAA) show a composition bias toward low complexity. Disordered regions lie at residues 892–969 (SEDA…VVDD), 981–1057 (EEAK…VQAP), 1087–1117 (VQTK…HKVT), and 1152–1217 (ISEM…FFTT). The span at 947 to 960 (STRRGRGGKTVRRT) shows a compositional bias: basic residues. Composition is skewed to polar residues over residues 986-1007 (SSQQ…TSNT) and 1087-1103 (VQTK…NQIS). Residues 1173-1186 (EEPATPSSGSSTSG) show a composition bias toward low complexity. Residues 1189–1200 (GNDDDMDDDDEE) show a composition bias toward acidic residues.

The protein belongs to the CRWN family.

The protein localises to the nucleus matrix. The protein resides in the nucleus lamina. Architectural component of nuclear structure that plays different roles in controlling nuclear size and morphology. Involved in the organization of multimeric complexes in the peripheral nucleoskeleton. The protein is Nuclear matrix constituent protein 1 of Allium cepa (Onion).